Reading from the N-terminus, the 122-residue chain is Large ribosomal subunit protein uL18 (122 aa).

Belongs to the universal ribosomal protein uL18 family. As to quaternary structure, part of the 50S ribosomal subunit; part of the 5S rRNA/L5/L18/L25 subcomplex. Contacts the 5S and 23S rRNAs.

In terms of biological role, this is one of the proteins that bind and probably mediate the attachment of the 5S RNA into the large ribosomal subunit, where it forms part of the central protuberance. The sequence is that of Large ribosomal subunit protein uL18 from Dictyoglomus thermophilum (strain ATCC 35947 / DSM 3960 / H-6-12).